The sequence spans 383 residues: Succinyl-diaminopimelate desuccinylase (383 aa).

Histidine 73 lines the Zn(2+) pocket. The active site involves aspartate 75. Aspartate 107 is a Zn(2+) binding site. Glutamate 141 functions as the Proton acceptor in the catalytic mechanism. Residues glutamate 142, glutamate 170, and histidine 356 each contribute to the Zn(2+) site.

Belongs to the peptidase M20A family. DapE subfamily. In terms of assembly, homodimer. It depends on Zn(2+) as a cofactor. The cofactor is Co(2+).

The catalysed reaction is N-succinyl-(2S,6S)-2,6-diaminopimelate + H2O = (2S,6S)-2,6-diaminopimelate + succinate. It functions in the pathway amino-acid biosynthesis; L-lysine biosynthesis via DAP pathway; LL-2,6-diaminopimelate from (S)-tetrahydrodipicolinate (succinylase route): step 3/3. Its function is as follows. Catalyzes the hydrolysis of N-succinyl-L,L-diaminopimelic acid (SDAP), forming succinate and LL-2,6-diaminopimelate (DAP), an intermediate involved in the bacterial biosynthesis of lysine and meso-diaminopimelic acid, an essential component of bacterial cell walls. This chain is Succinyl-diaminopimelate desuccinylase, found in Pseudomonas syringae pv. tomato (strain ATCC BAA-871 / DC3000).